The sequence spans 456 residues: Enolase (456 aa).

Glutamine 164 contributes to the (2R)-2-phosphoglycerate binding site. Glutamate 207 serves as the catalytic Proton donor. Aspartate 244, glutamate 287, and aspartate 314 together coordinate Mg(2+). Residues lysine 339, arginine 368, serine 369, and lysine 390 each coordinate (2R)-2-phosphoglycerate. Lysine 339 (proton acceptor) is an active-site residue.

The protein belongs to the enolase family. In terms of assembly, component of the RNA degradosome, a multiprotein complex involved in RNA processing and mRNA degradation. Requires Mg(2+) as cofactor.

It is found in the cytoplasm. The protein resides in the secreted. The protein localises to the cell surface. It catalyses the reaction (2R)-2-phosphoglycerate = phosphoenolpyruvate + H2O. Its pathway is carbohydrate degradation; glycolysis; pyruvate from D-glyceraldehyde 3-phosphate: step 4/5. Its function is as follows. Catalyzes the reversible conversion of 2-phosphoglycerate (2-PG) into phosphoenolpyruvate (PEP). It is essential for the degradation of carbohydrates via glycolysis. The polypeptide is Enolase (Francisella tularensis subsp. novicida (strain U112)).